The following is a 288-amino-acid chain: Proteasome subunit beta (288 aa).

Positions 1-57 are cleaved as a propeptide — removed in mature form; by autocatalysis; it reads MTAGDPMRLHPGHALSSFTEHLRALAPELLGPNRFAALDGATGSSGGTGAKDIAPHG. Thr58 functions as the Nucleophile in the catalytic mechanism.

Belongs to the peptidase T1B family. As to quaternary structure, the 20S proteasome core is composed of 14 alpha and 14 beta subunits that assemble into four stacked heptameric rings, resulting in a barrel-shaped structure. The two inner rings, each composed of seven catalytic beta subunits, are sandwiched by two outer rings, each composed of seven alpha subunits. The catalytic chamber with the active sites is on the inside of the barrel. Has a gated structure, the ends of the cylinder being occluded by the N-termini of the alpha-subunits. Is capped by the proteasome-associated ATPase, ARC.

The protein resides in the cytoplasm. The catalysed reaction is Cleavage of peptide bonds with very broad specificity.. It functions in the pathway protein degradation; proteasomal Pup-dependent pathway. With respect to regulation, the formation of the proteasomal ATPase ARC-20S proteasome complex, likely via the docking of the C-termini of ARC into the intersubunit pockets in the alpha-rings, may trigger opening of the gate for substrate entry. Interconversion between the open-gate and close-gate conformations leads to a dynamic regulation of the 20S proteasome proteolysis activity. In terms of biological role, component of the proteasome core, a large protease complex with broad specificity involved in protein degradation. This chain is Proteasome subunit beta, found in Nocardia farcinica (strain IFM 10152).